Reading from the N-terminus, the 516-residue chain is MEISYGRALWRNFLGQSPDWYKLALIIFLIVNPLVFAVAPFVAGWLLVVEFIFTLAMALKCYPLLPGGLLAIEALLIGMTSPAHVREEIAGNLEVLLLLMFMVAGIYFMKQLLLFVFTRLLLGIRSKMLLSLAFCLAAAFLSAFLDALTVVAVVISVAVGFYGIYHRVASARPDDSDLLNDSHIEQHYREVLEQFRGFLRSLMMHAGVGTALGGVMTMVGEPQNLIIAKAAGWHFGEFFLRMAPVTLPVMVCGLLTCLLVEKYRLFGYGEPLPPTVRKVLQEFDDRSRAQRSRQERLRLIAQALIGVWLIVALAFHLAEVGLIGLSVIILATTFTGVTDEHAIGKAFTEALPFTALLTVFFSIVAVIIDQQLFTPVIEFVLQASPHAQLSLFYLFNGLLSSISDNVFVGTVYINEAKAALEHGAISLPQFEMLAVAINTGTNLPSVATPNGQAAFLFLLTSALAPLIRLSYGRMVWMALPYTIVLTLVGLLCVEFTLMPVTDWLLAHGWLVTPTLP.

Transmembrane regions (helical) follow at residues 23-43 (LALIIFLIVNPLVFAVAPFVA), 61-80 (CYPLLPGGLLAIEALLIGMT), 97-117 (LLLMFMVAGIYFMKQLLLFVF), 120-140 (LLLGIRSKMLLSLAFCLAAAF), 144-164 (FLDALTVVAVVISVAVGFYGI), 202-222 (LMMHAGVGTALGGVMTMVGEP), 238-258 (FFLRMAPVTLPVMVCGLLTCL), 303-323 (ALIGVWLIVALAFHLAEVGLI), 348-368 (TEALPFTALLTVFFSIVAVII), 391-411 (LFYLFNGLLSSISDNVFVGTV), 447-467 (ATPNGQAAFLFLLTSALAPLI), and 475-495 (VWMALPYTIVLTLVGLLCVEF).

This sequence belongs to the NhaB Na(+)/H(+) (TC 2.A.34) antiporter family.

Its subcellular location is the cell inner membrane. The enzyme catalyses 2 Na(+)(in) + 3 H(+)(out) = 2 Na(+)(out) + 3 H(+)(in). Functionally, na(+)/H(+) antiporter that extrudes sodium in exchange for external protons. The sequence is that of Na(+)/H(+) antiporter NhaB from Klebsiella pneumoniae subsp. pneumoniae (strain ATCC 700721 / MGH 78578).